A 124-amino-acid chain; its full sequence is Ribonuclease pancreatic (124 aa).

Basic and acidic residues predominate over residues 1 to 13 (KETSAQKFERQHM). The interval 1–25 (KETSAQKFERQHMDSTGSSSSSPTY) is disordered. Substrate contacts are provided by Lys7 and Arg10. The Proton acceptor role is filled by His12. Cystine bridges form between Cys26/Cys84, Cys40/Cys95, Cys58/Cys110, and Cys65/Cys72. Residues 41–45 (KPVNT), Lys66, and Arg85 contribute to the substrate site. The Proton donor role is filled by His119.

The protein belongs to the pancreatic ribonuclease family. Monomer. Interacts with and forms tight 1:1 complexes with RNH1. Dimerization of two such complexes may occur. Interaction with RNH1 inhibits this protein. As to expression, pancreas.

The protein localises to the secreted. The enzyme catalyses an [RNA] containing cytidine + H2O = an [RNA]-3'-cytidine-3'-phosphate + a 5'-hydroxy-ribonucleotide-3'-[RNA].. The catalysed reaction is an [RNA] containing uridine + H2O = an [RNA]-3'-uridine-3'-phosphate + a 5'-hydroxy-ribonucleotide-3'-[RNA].. Its function is as follows. Endonuclease that catalyzes the cleavage of RNA on the 3' side of pyrimidine nucleotides. Acts on single-stranded and double-stranded RNA. This chain is Ribonuclease pancreatic (RNASE1), found in Ondatra zibethicus (Muskrat).